The sequence spans 347 residues: Protein-glutamate methylesterase/protein-glutamine glutaminase (347 aa).

The Response regulatory domain occupies 6-123 (RVLVVDDSPT…HRPFGDLAEK (118 aa)). Position 57 is a 4-aspartylphosphate (aspartate 57). The region spanning 150–342 (FRVGRKIVAI…EEILKLTAAR (193 aa)) is the CheB-type methylesterase domain. Active-site residues include serine 162, histidine 188, and aspartate 284.

Belongs to the CheB family. In terms of processing, phosphorylated by CheA. Phosphorylation of the N-terminal regulatory domain activates the methylesterase activity.

It localises to the cytoplasm. The catalysed reaction is [protein]-L-glutamate 5-O-methyl ester + H2O = L-glutamyl-[protein] + methanol + H(+). It catalyses the reaction L-glutaminyl-[protein] + H2O = L-glutamyl-[protein] + NH4(+). In terms of biological role, involved in chemotaxis. Part of a chemotaxis signal transduction system that modulates chemotaxis in response to various stimuli. Catalyzes the demethylation of specific methylglutamate residues introduced into the chemoreceptors (methyl-accepting chemotaxis proteins or MCP) by CheR. Also mediates the irreversible deamidation of specific glutamine residues to glutamic acid. In Rhizobium etli (strain ATCC 51251 / DSM 11541 / JCM 21823 / NBRC 15573 / CFN 42), this protein is Protein-glutamate methylesterase/protein-glutamine glutaminase.